A 226-amino-acid chain; its full sequence is Ornithine decarboxylase antizyme (226 aa).

The protein belongs to the ODC antizyme family. In terms of assembly, interacts with ODC and thereby sterically blocks ODC homodimerization.

Its function is as follows. Ornithine decarboxylase (ODC) antizyme protein that negatively regulates ODC activity and intracellular polyamine biosynthesis in response to increased intracellular polyamine levels. Binds to ODC monomers, inhibiting the assembly of the functional ODC homodimer, and targets the monomers for ubiquitin-independent proteolytic destruction by the 26S proteasome. The protein is Ornithine decarboxylase antizyme (spa1) of Schizosaccharomyces pombe (strain 972 / ATCC 24843) (Fission yeast).